Consider the following 237-residue polypeptide: Uridylate kinase (237 aa).

12–15 is a binding site for ATP; that stretch reads KLSG. G53 is a UMP binding site. 2 residues coordinate ATP: G54 and R58. Residues D73 and 134-141 each bind UMP; that span reads TGNPYFTT. ATP is bound by residues T161, Y167, and D170.

The protein belongs to the UMP kinase family. Homohexamer.

It is found in the cytoplasm. It carries out the reaction UMP + ATP = UDP + ADP. Its pathway is pyrimidine metabolism; CTP biosynthesis via de novo pathway; UDP from UMP (UMPK route): step 1/1. With respect to regulation, inhibited by UTP. Catalyzes the reversible phosphorylation of UMP to UDP. In Rhizorhabdus wittichii (strain DSM 6014 / CCUG 31198 / JCM 15750 / NBRC 105917 / EY 4224 / RW1) (Sphingomonas wittichii), this protein is Uridylate kinase.